We begin with the raw amino-acid sequence, 134 residues long: MSSKVIDKIMSFLGIEEEEEEIQTPQPVVSYDRRPKVVNIHTNPQIKVLISKPEKFEQVLSICNELKSKKPVIVDLQKMDKSEAQRVVDFLSGAVYALNGEITKISGYIFLVAPENFDVTGDIKEEVNALYNLN.

It belongs to the SepF family. Homodimer. Interacts with FtsZ.

The protein resides in the cytoplasm. Cell division protein that is part of the divisome complex and is recruited early to the Z-ring. Probably stimulates Z-ring formation, perhaps through the cross-linking of FtsZ protofilaments. Its function overlaps with FtsA. The polypeptide is Cell division protein SepF (Caldanaerobacter subterraneus subsp. tengcongensis (strain DSM 15242 / JCM 11007 / NBRC 100824 / MB4) (Thermoanaerobacter tengcongensis)).